The sequence spans 689 residues: Glycine--tRNA ligase beta subunit (689 aa).

Belongs to the class-II aminoacyl-tRNA synthetase family. As to quaternary structure, tetramer of two alpha and two beta subunits.

It localises to the cytoplasm. The catalysed reaction is tRNA(Gly) + glycine + ATP = glycyl-tRNA(Gly) + AMP + diphosphate. This is Glycine--tRNA ligase beta subunit from Mannheimia succiniciproducens (strain KCTC 0769BP / MBEL55E).